Consider the following 416-residue polypeptide: UDP-N-acetylglucosamine 1-carboxyvinyltransferase (416 aa).

Position 22 to 23 (22 to 23 (KN)) interacts with phosphoenolpyruvate. Arg-92 serves as a coordination point for UDP-N-acetyl-alpha-D-glucosamine. The active-site Proton donor is Cys-116. Cys-116 carries the post-translational modification 2-(S-cysteinyl)pyruvic acid O-phosphothioketal. UDP-N-acetyl-alpha-D-glucosamine-binding positions include 121–125 (RPIDQ), Asp-304, and Ile-326.

It belongs to the EPSP synthase family. MurA subfamily.

It is found in the cytoplasm. The catalysed reaction is phosphoenolpyruvate + UDP-N-acetyl-alpha-D-glucosamine = UDP-N-acetyl-3-O-(1-carboxyvinyl)-alpha-D-glucosamine + phosphate. It functions in the pathway cell wall biogenesis; peptidoglycan biosynthesis. In terms of biological role, cell wall formation. Adds enolpyruvyl to UDP-N-acetylglucosamine. This Desulfatibacillum aliphaticivorans protein is UDP-N-acetylglucosamine 1-carboxyvinyltransferase.